Here is a 464-residue protein sequence, read N- to C-terminus: MGKRLLDKLWERHVVTTNENGLDLLYIDLHLVHEVTSPQAFEGLRLTNRKVRRPDLTFATMDHNIPTKDVWNITDRIAKQQLDTLRANCKQFQVPLADIGDEEQGIVHVIGPELGLTQPGKTIVCGDSHTATHGAFGALAFGIGTSEVEHVLATQTLWQRKPKAMGIELKGKLQKGVYAKDIILHLLSKYGVAVGTGYVMEFYGETIGAMEMEERMTLCNMAIEGGAKAGIIAPDEKTFVYVKGRKYAPRDYETFEKKWFELYTDADAIYDLHISIDVTDLAPYVTWGTNPSMGVRIDEKLPEKHDVNDERAFSYMGLIPGQSTYDIPVQHVFIGSCTNSRLSDLEIAASVVKGRKVKEGVRALVVPGSKRVRDAAIQKGLHHIFEEAGFEWREPGCSMCLGMNPDQVPEGEHCASTSNRNFEGRQGKGARTHLVSPAMAAAAALYGHFVDTRKESYDGAISYS.

C337, C397, and C400 together coordinate [4Fe-4S] cluster.

It belongs to the aconitase/IPM isomerase family. LeuC type 1 subfamily. As to quaternary structure, heterodimer of LeuC and LeuD. It depends on [4Fe-4S] cluster as a cofactor.

It catalyses the reaction (2R,3S)-3-isopropylmalate = (2S)-2-isopropylmalate. It participates in amino-acid biosynthesis; L-leucine biosynthesis; L-leucine from 3-methyl-2-oxobutanoate: step 2/4. In terms of biological role, catalyzes the isomerization between 2-isopropylmalate and 3-isopropylmalate, via the formation of 2-isopropylmaleate. This is 3-isopropylmalate dehydratase large subunit from Bacillus thuringiensis subsp. konkukian (strain 97-27).